Here is a 458-residue protein sequence, read N- to C-terminus: GTPase Der (458 aa).

2 EngA-type G domains span residues 3 to 167 and 176 to 351; these read PVVV…PETE and IKLA…AQYT. Residues 9 to 16, 56 to 60, 119 to 122, 182 to 189, 229 to 233, and 294 to 297 each bind GTP; these read GRPNVGKS, DTGGF, NKID, DTAGL, and NKWD. Residues 352–436 enclose the KH-like domain; the sequence is FNIKTGELNN…PIRLFFREKP (85 aa).

It belongs to the TRAFAC class TrmE-Era-EngA-EngB-Septin-like GTPase superfamily. EngA (Der) GTPase family. In terms of assembly, associates with the 50S ribosomal subunit.

GTPase that plays an essential role in the late steps of ribosome biogenesis. This is GTPase Der from Desulfosudis oleivorans (strain DSM 6200 / JCM 39069 / Hxd3) (Desulfococcus oleovorans).